Reading from the N-terminus, the 321-residue chain is Acyl-CoA 5-desaturase AL21 (321 aa).

The next 2 helical transmembrane spans lie at 42–62 (IFHI…PFTF) and 64–84 (WSAF…GTTL). 5 residues coordinate Fe cation: His87, His92, His124, His127, and His128. The Histidine box-1 signature appears at 87 to 92 (HRNLTH). The short motif at 124–128 (HRYHH) is the Histidine box-2 element. Residues 190 to 210 (LQAALLYMFGGFPFIVWGMAV) traverse the membrane as a helical segment. Positions 227, 256, 259, and 260 each coordinate Fe cation. Positions 256–260 (HNNHH) match the Histidine box-3 motif.

This sequence belongs to the fatty acid desaturase type 1 family. The cofactor is Fe(2+).

The protein localises to the membrane. It catalyses the reaction (11Z,14Z)-eicosadienoyl-CoA + AH2 + O2 = (5Z,11Z,14Z)-eicosatrienoyl-CoA + A + 2 H2O. The enzyme catalyses (11Z,14Z,17Z)-eicosatrienoyl-CoA + AH2 + O2 = (5Z,11Z,14Z,17Z)-eicosatetraenoyl-CoA + A + 2 H2O. Its pathway is lipid metabolism; polyunsaturated fatty acid biosynthesis. Functionally, catalyzes the desaturation of 20:2Delta(11,14) and 20:3Delta(11,14,17) to generate sciadonic acid (20:3Delta(5,11,14)) and juniperonic acid (20:4Delta(5,11,14,17)). The enzyme can also use 16:0 and 18:0 as substrates. The protein is Acyl-CoA 5-desaturase AL21 of Anemone leveillei (Windflower).